The sequence spans 349 residues: Mitomycin biosynthesis 6-O-methyltransferase (349 aa).

Residues Ser167, Gly190, 213-214 (ER), 240-241 (DF), and Lys255 contribute to the S-adenosyl-L-methionine site. His259 serves as the catalytic Proton acceptor. Asn288 is a binding site for substrate.

This sequence belongs to the class I-like SAM-binding methyltransferase superfamily. Cation-independent O-methyltransferase family. COMT subfamily. Homodimer.

The catalysed reaction is 6-demethylmitomycin A + S-adenosyl-L-methionine = mitomycin A + S-adenosyl-L-homocysteine. It catalyses the reaction 6-demethylmitomycin B + S-adenosyl-L-methionine = mitomycin B + S-adenosyl-L-homocysteine. With respect to regulation, completely inhibited by Zn(2+) and Cu(2+). Its function is as follows. Involved in the biosynthesis of the quinone methoxy group present in the mitomycin A and B, which are used as anticancer agents. In vitro, catalyzes the 6-O-methylation of both C9-beta- and C9-alpha-configured 6-hydroxymitomycins via the transfer of the S-methyl group of S-adenosyl-L-methionine (AdoMet) to the 6-demethylmitomycin A and B. It can also use hydroxyquinone as substrate. This Streptomyces lavendulae protein is Mitomycin biosynthesis 6-O-methyltransferase.